The chain runs to 442 residues: MTNTNETIFALSTVFGKSGVAVIRISGNYALKALNHFHIKKEIKPRFATLVDLYDDSSQLIDNGIIIYFPAPNSFTGEDVIELQVHGSKAVIKIILEELSKVFVMAKPGEFSLRAFLNGKFDLTQIEGIADLIDAETKMQAKQAIKQISGELERLYSNWRQRLITIQSKIEAYIDFPEDIWAEKSELEKINNEVQSLVRLIQEHLNDNRRGERLREGLHIVITGEPNVGKSTLFNFLAKRDIAIVSEYAGTTRDILEAHIDIGGYPIILSDTAGIRESSDPIELEGISRAKKRSFEADLRIELFPFEQRPNINCNVVNSDTIYVLSKADDVINNHDIKINGIDLLPVSILKGIGTNKLISLIKEKAEEKFGHDRDTPVITRQRHRNHMQKALEHLQRFNIDNPIELISEDLRLAAFELGAVIGIIDVEEILSSVFSNFCVGK.

Positions 24, 82, and 120 each coordinate (6S)-5-formyl-5,6,7,8-tetrahydrofolate. In terms of domain architecture, TrmE-type G spans 217–367; sequence GLHIVITGEP…LISLIKEKAE (151 aa). GTP contacts are provided by residues 227-232, 246-252, and 271-274; these read NVGKST, SEYAGTT, and DTAG. Positions 231 and 252 each coordinate Mg(2+). Residue lysine 442 participates in (6S)-5-formyl-5,6,7,8-tetrahydrofolate binding.

This sequence belongs to the TRAFAC class TrmE-Era-EngA-EngB-Septin-like GTPase superfamily. TrmE GTPase family. Homodimer. Heterotetramer of two MnmE and two MnmG subunits. K(+) serves as cofactor.

The protein resides in the cytoplasm. Exhibits a very high intrinsic GTPase hydrolysis rate. Involved in the addition of a carboxymethylaminomethyl (cmnm) group at the wobble position (U34) of certain tRNAs, forming tRNA-cmnm(5)s(2)U34. This chain is tRNA modification GTPase MnmE, found in Wolbachia sp. subsp. Drosophila simulans (strain wRi).